Consider the following 440-residue polypeptide: Golgi reassembly-stacking protein 1 (440 aa).

Gly-2 is lipidated: N-myristoyl glycine. PDZ GRASP-type domains follow at residues 15–105 (EGFH…FCSF) and 111–199 (QVWH…YGYL). The segment at 15-215 (EGFHLHGVQE…PPSYHKKPPG (201 aa)) is GRASP. Residues His-18, His-20, and Cys-103 each coordinate Zn(2+). Positions 190 to 202 (LGCGIGYGYLHRI) are essential for interaction with GOLGA2/GM130. Disordered regions lie at residues 205-248 (QPPS…ETGS), 261-301 (PGSS…PVQR), and 327-440 (LPSS…STTE). Pro residues predominate over residues 214 to 239 (PGTPPPSALPLGAPPPDALPPGPTPE). Residue Thr-216 is modified to Phosphothreonine. The span at 327-336 (LPSSTELTTT) shows a compositional bias: low complexity. The segment covering 337-351 (AVSTSGPEDICSSSS) has biased composition (polar residues). 3 positions are modified to phosphoserine: Ser-362, Ser-364, and Ser-373.

The protein belongs to the GORASP family. As to quaternary structure, homodimer. Forms higher-order oligomers under interphase but not mitotic conditions. Dimers of the protein on one membrane might be able to interact with dimers on another and so stack cisternae. Interacts with the C-terminus of GOLGA2/GM130 under both mitotic and non-mitotic conditions. The interaction is critical for the correct targeting of both proteins to the cis-Golgi. Interacts with TMED2 and TMED3. In terms of processing, phosphorylated by CDC2/B1 and PLK kinases during mitosis. Phosphorylation cycle correlates with the cisternal stacking cycle. Phosphorylation of the homodimer prevents the association of dimers into higher-order oligomers, leading to cisternal unstacking. Post-translationally, target for caspase-3 cleavage during apoptosis. The cleavage contributes to Golgi fragmentation and occurs very early in the execution phase of apoptosis. Myristoylated.

It localises to the golgi apparatus. The protein resides in the cis-Golgi network membrane. The protein localises to the endoplasmic reticulum-Golgi intermediate compartment membrane. Its function is as follows. Key structural protein of the Golgi apparatus. The membrane cisternae of the Golgi apparatus adhere to each other to form stacks, which are aligned side by side to form the Golgi ribbon. Acting in concert with GORASP2/GRASP55, is required for the formation and maintenance of the Golgi ribbon, and may be dispensable for the formation of stacks. However, other studies suggest that GORASP1 plays an important role in assembly and membrane stacking of the cisternae, and in the reassembly of Golgi stacks after breakdown during mitosis. Caspase-mediated cleavage of GORASP1 is required for fragmentation of the Golgi during apoptosis. Also mediates, via its interaction with GOLGA2/GM130, the docking of transport vesicles with the Golgi membranes. Mediates ER stress-induced unconventional (ER/Golgi-independent) trafficking of core-glycosylated CFTR to cell membrane. This chain is Golgi reassembly-stacking protein 1 (GORASP1), found in Homo sapiens (Human).